A 516-amino-acid polypeptide reads, in one-letter code: Cytochrome P450 monooxygenase asR2 (516 aa).

Residues Leu-9–Ile-29 form a helical membrane-spanning segment. N-linked (GlcNAc...) asparagine glycosylation is found at Asn-248 and Asn-273. Cys-461 is a heme binding site.

The protein belongs to the cytochrome P450 family. Heme is required as a cofactor.

Its subcellular location is the membrane. Its pathway is secondary metabolite biosynthesis; terpenoid biosynthesis. Functionally, cytochrome P450 monooxygenase; part of the gene cluster that mediates the biosynthesis of xenovulene A, an unusual meroterpenoid that has potent inhibitory effects on the human gamma-aminobutyrate A (GABAA) benzodiazepine receptor. The first step of xenovulene A biosynthesis is the biosynthesis of 3-methylorcinaldehyde performed by the non-reducing polyketide synthase aspks1. The salicylate hydroxylase asL1 then catalyzes the oxidative dearomatization of 3-methylorcinaldehyde to yield a dearomatized hydroxycyclohexadione. The 2-oxoglutarate-dependent dioxygenase asL3 further catalyzes the oxidative ring expansion to provide the first tropolone metabolite. The cytochrome P450 monooxygenase asR2 allows the synthesis of tropolone hemiacetal. In parallel, a previously unrecognised class of terpene cyclase, asR6, produces alpha-humulene from farnesylpyrophosphate (FPP). The putative Diels-Alderase asR5 probably catalyzes the formation of the tropolone-humulene skeleton by linking humulene and the polyketide moiety. Oxidative-ring contractions catalyzed by asL4 and asL6 then processively remove carbon atoms from the polyketide to yield xenovulene A. This Sarocladium schorii (Acremonium strictum (strain IMI 501407)) protein is Cytochrome P450 monooxygenase asR2.